The chain runs to 505 residues: Glutamate--cysteine ligase (505 aa).

It belongs to the glutamate--cysteine ligase type 1 family. Type 1 subfamily.

It carries out the reaction L-cysteine + L-glutamate + ATP = gamma-L-glutamyl-L-cysteine + ADP + phosphate + H(+). Its pathway is sulfur metabolism; glutathione biosynthesis; glutathione from L-cysteine and L-glutamate: step 1/2. The protein is Glutamate--cysteine ligase of Wigglesworthia glossinidia brevipalpis.